Consider the following 510-residue polypeptide: Zinc finger and SCAN domain-containing protein 18 (510 aa).

Positions Met-1 to Arg-40 are disordered. In terms of domain architecture, SCAN box spans Arg-49–Leu-131. Disordered stretches follow at residues Ala-172–Pro-191, Glu-201–His-231, Thr-263–Tyr-413, and Lys-461–Arg-510. Basic and acidic residues-rich tracts occupy residues Gln-214–His-231 and Thr-263–Pro-273. Low complexity predominate over residues Ala-288–Gly-299. Over residues Asp-344–Gln-356 the composition is skewed to polar residues. 2 consecutive C2H2-type zinc fingers follow at residues Tyr-413–His-435 and Tyr-441–His-463. Low complexity predominate over residues Gly-491–Ala-501.

It belongs to the krueppel C2H2-type zinc-finger protein family.

The protein resides in the nucleus. Functionally, may be involved in transcriptional regulation. This Homo sapiens (Human) protein is Zinc finger and SCAN domain-containing protein 18 (ZSCAN18).